The sequence spans 135 residues: PTS system sorbose-specific EIIA component (135 aa).

One can recognise a PTS EIIA type-4 domain in the interval 1–131 (MVHAIFCAHG…CVVWQQPETV (131 aa)). His9 functions as the Tele-phosphohistidine intermediate in the catalytic mechanism. His9 is modified (phosphohistidine; by HPr).

The protein resides in the cytoplasm. Functionally, the phosphoenolpyruvate-dependent sugar phosphotransferase system (PTS), a major carbohydrate active transport system, catalyzes the phosphorylation of incoming sugar substrates concomitant with their translocation across the cell membrane. The enzyme II SorABFM PTS system is involved in L-sorbose transport. The chain is PTS system sorbose-specific EIIA component from Klebsiella pneumoniae.